A 307-amino-acid polypeptide reads, in one-letter code: Porphobilinogen deaminase (307 aa).

Cysteine 241 is modified (S-(dipyrrolylmethanemethyl)cysteine).

This sequence belongs to the HMBS family. Monomer. Requires dipyrromethane as cofactor.

The enzyme catalyses 4 porphobilinogen + H2O = hydroxymethylbilane + 4 NH4(+). It participates in porphyrin-containing compound metabolism; protoporphyrin-IX biosynthesis; coproporphyrinogen-III from 5-aminolevulinate: step 2/4. Tetrapolymerization of the monopyrrole PBG into the hydroxymethylbilane pre-uroporphyrinogen in several discrete steps. The chain is Porphobilinogen deaminase from Coxiella burnetii (strain RSA 331 / Henzerling II).